We begin with the raw amino-acid sequence, 213 residues long: Octanoyltransferase (213 aa).

Residues 32-207 (ENSHDEIWLV…NILALLNNPP (176 aa)) enclose the BPL/LPL catalytic domain. Residues 71–78 (RGGQVTYH), 138–140 (SLG), and 151–153 (GLA) contribute to the substrate site. Cysteine 169 acts as the Acyl-thioester intermediate in catalysis.

Belongs to the LipB family.

It is found in the cytoplasm. It carries out the reaction octanoyl-[ACP] + L-lysyl-[protein] = N(6)-octanoyl-L-lysyl-[protein] + holo-[ACP] + H(+). It functions in the pathway protein modification; protein lipoylation via endogenous pathway; protein N(6)-(lipoyl)lysine from octanoyl-[acyl-carrier-protein]: step 1/2. In terms of biological role, catalyzes the transfer of endogenously produced octanoic acid from octanoyl-acyl-carrier-protein onto the lipoyl domains of lipoate-dependent enzymes. Lipoyl-ACP can also act as a substrate although octanoyl-ACP is likely to be the physiological substrate. This chain is Octanoyltransferase, found in Salmonella typhi.